The sequence spans 420 residues: Serine--tRNA ligase (420 aa).

229–231 provides a ligand contact to L-serine; sequence TAE. Position 260–262 (260–262) interacts with ATP; sequence RSE. Residue glutamate 283 coordinates L-serine. Residue 347–350 participates in ATP binding; it reads EISS. Position 381 (serine 381) interacts with L-serine.

Belongs to the class-II aminoacyl-tRNA synthetase family. Type-1 seryl-tRNA synthetase subfamily. As to quaternary structure, homodimer. The tRNA molecule binds across the dimer.

The protein localises to the cytoplasm. It catalyses the reaction tRNA(Ser) + L-serine + ATP = L-seryl-tRNA(Ser) + AMP + diphosphate + H(+). The catalysed reaction is tRNA(Sec) + L-serine + ATP = L-seryl-tRNA(Sec) + AMP + diphosphate + H(+). Its pathway is aminoacyl-tRNA biosynthesis; selenocysteinyl-tRNA(Sec) biosynthesis; L-seryl-tRNA(Sec) from L-serine and tRNA(Sec): step 1/1. Functionally, catalyzes the attachment of serine to tRNA(Ser). Is also able to aminoacylate tRNA(Sec) with serine, to form the misacylated tRNA L-seryl-tRNA(Sec), which will be further converted into selenocysteinyl-tRNA(Sec). This chain is Serine--tRNA ligase, found in Gluconobacter oxydans (strain 621H) (Gluconobacter suboxydans).